Here is a 147-residue protein sequence, read N- to C-terminus: Hemoglobin subunit epsilon-1 (147 aa).

The Globin domain occupies 3 to 147; that stretch reads HFTAEEKAAI…VATALAHKYH (145 aa). 2 residues coordinate heme b: H64 and H93.

The protein belongs to the globin family. In terms of assembly, heterotetramer of two epsilon chains and two alpha chains. In terms of tissue distribution, red blood cells.

In terms of biological role, beta-type chain found in early embryos. This Capra hircus (Goat) protein is Hemoglobin subunit epsilon-1 (HBE1).